The chain runs to 450 residues: UDP-N-acetylmuramoylalanine--D-glutamate ligase (450 aa).

Residue 119-125 (GSNGKTT) participates in ATP binding.

It belongs to the MurCDEF family.

The protein resides in the cytoplasm. The enzyme catalyses UDP-N-acetyl-alpha-D-muramoyl-L-alanine + D-glutamate + ATP = UDP-N-acetyl-alpha-D-muramoyl-L-alanyl-D-glutamate + ADP + phosphate + H(+). Its pathway is cell wall biogenesis; peptidoglycan biosynthesis. Its function is as follows. Cell wall formation. Catalyzes the addition of glutamate to the nucleotide precursor UDP-N-acetylmuramoyl-L-alanine (UMA). The polypeptide is UDP-N-acetylmuramoylalanine--D-glutamate ligase (Streptococcus pneumoniae (strain CGSP14)).